A 192-amino-acid polypeptide reads, in one-letter code: Late embryogenesis abundant protein 47 (192 aa).

The Nuclear localization signal (NLS) signature appears at Gln-5–Pro-9. 2 SMP domains span residues Ile-68–Arg-125 and Thr-133–Gln-190. A disordered region spans residues Leu-146–Tyr-174. Over residues Pro-147 to Glu-158 the composition is skewed to basic and acidic residues.

This sequence belongs to the LEA type SMP family.

It localises to the cytoplasm. The protein localises to the nucleus. In terms of biological role, LEA proteins are late embryonic proteins abundant in higher plant seed embryos. The function of those proteins is not known. The protein is Late embryogenesis abundant protein 47 of Arabidopsis thaliana (Mouse-ear cress).